The following is a 568-amino-acid chain: COMPASS component cclA (568 aa).

Residues 1-113 (MASDSGTPPP…MRYKLAPPKP (113 aa)) form a disordered region. Basic and acidic residues-rich tracts occupy residues 68-77 (KESLKKRESK) and 89-98 (PDPKHREPKQ). Positions 160-353 (ADPGFPSSLY…IPIRFKQHIY (194 aa)) constitute a B30.2/SPRY domain.

It belongs to the cclA family. As to quaternary structure, component of the COMPASS complex.

It is found in the nucleus. Its subcellular location is the chromosome. It localises to the telomere. In terms of biological role, component of the COMPASS (Set1C) complex that specifically mono-, di- and trimethylates histone H3 to form H3K4me1/2/3, which subsequently plays a role in telomere length maintenance and transcription elongation regulation. Controls the production of several secondary metabolites, including colletochlorins, higginsianins and sclerosporide. Plays a key role in mycelial growth, sporulation, spore germination and virulence. This is COMPASS component cclA from Colletotrichum higginsianum (strain IMI 349063) (Crucifer anthracnose fungus).